The chain runs to 381 residues: Tryptophan--tRNA ligase (381 aa).

Residues 82 to 90 (PSLGMHIGH) carry the 'HIGH' region motif. Residues 254-258 (KMSSS) carry the 'KMSKS' region motif.

This sequence belongs to the class-I aminoacyl-tRNA synthetase family.

Its subcellular location is the cytoplasm. The catalysed reaction is tRNA(Trp) + L-tryptophan + ATP = L-tryptophyl-tRNA(Trp) + AMP + diphosphate + H(+). This Sulfolobus acidocaldarius (strain ATCC 33909 / DSM 639 / JCM 8929 / NBRC 15157 / NCIMB 11770) protein is Tryptophan--tRNA ligase.